Reading from the N-terminus, the 776-residue chain is Endonuclease MutS2 (776 aa).

328-335 (GPNTGGKT) is an ATP binding site. Residues 701–776 (LDLRGKRYEE…GSGATIVTFK (76 aa)) enclose the Smr domain.

This sequence belongs to the DNA mismatch repair MutS family. MutS2 subfamily. As to quaternary structure, homodimer. Binds to stalled ribosomes, contacting rRNA.

Endonuclease that is involved in the suppression of homologous recombination and thus may have a key role in the control of bacterial genetic diversity. In terms of biological role, acts as a ribosome collision sensor, splitting the ribosome into its 2 subunits. Detects stalled/collided 70S ribosomes which it binds and splits by an ATP-hydrolysis driven conformational change. Acts upstream of the ribosome quality control system (RQC), a ribosome-associated complex that mediates the extraction of incompletely synthesized nascent chains from stalled ribosomes and their subsequent degradation. Probably generates substrates for RQC. This is Endonuclease MutS2 from Streptococcus mutans serotype c (strain ATCC 700610 / UA159).